A 119-amino-acid polypeptide reads, in one-letter code: Large ribosomal subunit protein bL20 (119 aa).

It belongs to the bacterial ribosomal protein bL20 family.

In terms of biological role, binds directly to 23S ribosomal RNA and is necessary for the in vitro assembly process of the 50S ribosomal subunit. It is not involved in the protein synthesizing functions of that subunit. In Aromatoleum aromaticum (strain DSM 19018 / LMG 30748 / EbN1) (Azoarcus sp. (strain EbN1)), this protein is Large ribosomal subunit protein bL20.